The sequence spans 240 residues: MEDDWEALAEQKAEQLFAKADVNKWAGEDEDDVKDNWEDDDEEEEKKDAPKQEDTPTKNAKPKKAAQQKKLKKEDLERLQREEEEFANMTPEQQLAEKRRLQKLQEENDLKTAMETLGITPMSTGNGIDGMHPTTKEEFTELAEAISKKLANYRASTEYQGFLEELLLKLFASLSSNNIRKAKTTLDNLYLEKQKVEKGDKPKKTKGIKVKAKLRVEGENTTLNEYETKYDDYDDYDDFM.

Residues 19–95 (KADVNKWAGE…FANMTPEQQL (77 aa)) form a disordered region. Residues 28–45 (EDEDDVKDNWEDDDEEEE) are compositionally biased toward acidic residues. Residues 46 to 56 (KKDAPKQEDTP) are compositionally biased toward basic and acidic residues. Residues 60-71 (AKPKKAAQQKKL) are compositionally biased toward basic residues. Coiled-coil stretches lie at residues 63–90 (KKAAQQKKLKKEDLERLQREEEEFANMT) and 176–235 (SNNI…DYDD). The span at 72–81 (KKEDLERLQR) shows a compositional bias: basic and acidic residues.

It belongs to the eIF-3 subunit J family. Component of the eukaryotic translation initiation factor 3 (eIF-3) complex.

The protein resides in the cytoplasm. Functionally, component of the eukaryotic translation initiation factor 3 (eIF-3) complex, which is involved in protein synthesis of a specialized repertoire of mRNAs and, together with other initiation factors, stimulates binding of mRNA and methionyl-tRNAi to the 40S ribosome. The eIF-3 complex specifically targets and initiates translation of a subset of mRNAs involved in cell proliferation. The polypeptide is Eukaryotic translation initiation factor 3 subunit J (Anopheles gambiae (African malaria mosquito)).